A 145-amino-acid chain; its full sequence is Large-conductance mechanosensitive channel (145 aa).

The next 3 helical transmembrane spans lie at 10–30, 41–61, and 87–107; these read FALK…GAFA, IMPI…MFLI, and GNFI…FMMV.

It belongs to the MscL family. As to quaternary structure, homopentamer.

The protein resides in the cell inner membrane. Channel that opens in response to stretch forces in the membrane lipid bilayer. May participate in the regulation of osmotic pressure changes within the cell. In Psychrobacter arcticus (strain DSM 17307 / VKM B-2377 / 273-4), this protein is Large-conductance mechanosensitive channel.